Here is a 388-residue protein sequence, read N- to C-terminus: Succinate--CoA ligase [ADP-forming] subunit beta (388 aa).

Residues Lys-9–His-244 form the ATP-grasp domain. Residues Lys-46, Gly-53–Gly-55, Glu-99, Thr-102, and Glu-107 contribute to the ATP site. Mg(2+)-binding residues include Asn-199 and Asp-213. Substrate is bound by residues Asn-264 and Gly-321–Val-323.

This sequence belongs to the succinate/malate CoA ligase beta subunit family. Heterotetramer of two alpha and two beta subunits. The cofactor is Mg(2+).

It catalyses the reaction succinate + ATP + CoA = succinyl-CoA + ADP + phosphate. The enzyme catalyses GTP + succinate + CoA = succinyl-CoA + GDP + phosphate. It functions in the pathway carbohydrate metabolism; tricarboxylic acid cycle; succinate from succinyl-CoA (ligase route): step 1/1. Succinyl-CoA synthetase functions in the citric acid cycle (TCA), coupling the hydrolysis of succinyl-CoA to the synthesis of either ATP or GTP and thus represents the only step of substrate-level phosphorylation in the TCA. The beta subunit provides nucleotide specificity of the enzyme and binds the substrate succinate, while the binding sites for coenzyme A and phosphate are found in the alpha subunit. This chain is Succinate--CoA ligase [ADP-forming] subunit beta, found in Pseudomonas aeruginosa (strain LESB58).